Here is a 79-residue protein sequence, read N- to C-terminus: U-scoloptoxin(15)-Sm1a (79 aa).

Residues methionine 1 to alanine 25 form the signal peptide.

Belongs to the scoloptoxin-15 family. Post-translationally, contains 2 disulfide bonds. Expressed by the venom gland.

It is found in the secreted. The chain is U-scoloptoxin(15)-Sm1a from Scolopendra morsitans (Tanzanian blue ringleg centipede).